The primary structure comprises 663 residues: UvrABC system protein B (663 aa).

Residues 31–188 (DNIEGGEKAQ…NDLVDIQFER (158 aa)) enclose the Helicase ATP-binding domain. Residue 44 to 51 (GATGTGKT) coordinates ATP. Residues 97–120 (YYDYYQPEAYVPSSDTYIEKDSSV) carry the Beta-hairpin motif. Positions 435–601 (QMDDLLGEIN…TIKKDIRDLI (167 aa)) constitute a Helicase C-terminal domain. One can recognise a UVR domain in the interval 627 to 662 (QEAIKKLQKQMQEAAELLDFELAAQIRDMVLELKAM).

It belongs to the UvrB family. In terms of assembly, forms a heterotetramer with UvrA during the search for lesions. Interacts with UvrC in an incision complex.

The protein localises to the cytoplasm. The UvrABC repair system catalyzes the recognition and processing of DNA lesions. A damage recognition complex composed of 2 UvrA and 2 UvrB subunits scans DNA for abnormalities. Upon binding of the UvrA(2)B(2) complex to a putative damaged site, the DNA wraps around one UvrB monomer. DNA wrap is dependent on ATP binding by UvrB and probably causes local melting of the DNA helix, facilitating insertion of UvrB beta-hairpin between the DNA strands. Then UvrB probes one DNA strand for the presence of a lesion. If a lesion is found the UvrA subunits dissociate and the UvrB-DNA preincision complex is formed. This complex is subsequently bound by UvrC and the second UvrB is released. If no lesion is found, the DNA wraps around the other UvrB subunit that will check the other stand for damage. The protein is UvrABC system protein B of Streptococcus mutans serotype c (strain ATCC 700610 / UA159).